The following is a 329-amino-acid chain: Isopenicillin N synthase (329 aa).

Isopenicillin N-binding residues include Arg87, Tyr91, and Tyr189. Arg87, Tyr91, Tyr189, His212, and Asp214 together coordinate N-[(5S)-5-amino-5-carboxypentanoyl]-L-cysteinyl-D-valine. A Fe2OG dioxygenase domain is found at 180–286 (TLSAVTLIHY…RLSLPFFLHA (107 aa)). Fe(2+)-binding residues include His212, Asp214, and His268. Arg277 serves as a coordination point for 2-oxoglutarate. An isopenicillin N-binding site is contributed by Ser279. Ser279 contributes to the N-[(5S)-5-amino-5-carboxypentanoyl]-L-cysteinyl-D-valine binding site.

Belongs to the iron/ascorbate-dependent oxidoreductase family. Requires Fe cation as cofactor. It depends on L-ascorbate as a cofactor.

The enzyme catalyses N-[(5S)-5-amino-5-carboxypentanoyl]-L-cysteinyl-D-valine + O2 = isopenicillin N + 2 H2O. It functions in the pathway antibiotic biosynthesis; penicillin G biosynthesis; penicillin G from L-alpha-aminoadipate and L-cysteine and L-valine: step 2/3. In terms of biological role, removes, in the presence of oxygen, 4 hydrogen atoms from delta-L-(alpha-aminoadipyl)-L-cysteinyl-D-valine (ACV) to form the azetidinone and thiazolidine rings of isopenicillin. In Streptomyces griseus, this protein is Isopenicillin N synthase (pcbC).